The sequence spans 200 residues: Somatotropin (200 aa).

The N-terminal stretch at 1–22 (MARVLVLLSVVVASLLFSQGAT) is a signal peptide. Residue histidine 38 participates in Zn(2+) binding. Residues cysteine 71 and cysteine 173 are joined by a disulfide bond. Residue glutamate 182 participates in Zn(2+) binding. Residues cysteine 190 and cysteine 198 are joined by a disulfide bond.

Belongs to the somatotropin/prolactin family.

Its subcellular location is the secreted. Growth hormone plays an important role in growth control and is involved in the regulation of several anabolic processes. Implicated as an osmoregulatory substance important for seawater adaptation. In Ictalurus punctatus (Channel catfish), this protein is Somatotropin (gh).